Reading from the N-terminus, the 263-residue chain is Aquaporin Lacbi1:233199 (263 aa).

Topologically, residues 1–17 (MFTLAHHRHAIRKPMAE) are cytoplasmic. Residues 18 to 38 (FFGVALLVIFGAGAACQVVLS) traverse the membrane as a helical segment. Residues 39–44 (TNPNSF) are Extracellular-facing. The helical transmembrane segment at 45 to 65 (LSINFGWAIGIAMGAWISGSI) threads the bilayer. Over 66-88 (SGGHINPAITIAMATYRGFPWRE) the chain is Cytoplasmic. Residues 71–73 (NPA) carry the NPA 1 motif. A helical membrane pass occupies residues 89-109 (VPSYILAQVLGGVVGAALVYA). Over 110–143 (NYIHAIDVFEGGRHIRTQATASLFATYALPYMTQ) the chain is Extracellular. Residues 144–164 (VSCFFSEFLATAVLAMMVLAL) traverse the membrane as a helical segment. The Cytoplasmic segment spans residues 165 to 174 (TDNRNGAPTN). The helical transmembrane segment at 175–195 (GLSPFALFVLFIGLGASLGME) threads the bilayer. At 196–227 (TAYALNPARDFGPRLFLAMAGYGKALFNYRSQ) the chain is on the extracellular side. Positions 201–203 (NPA) match the NPA 2 motif. Residues 228 to 248 (YWLWAPIIAPVLGAQAGGLLY) form a helical membrane-spanning segment. At 249–263 (DTFLYDGDDSPIKWR) the chain is on the cytoplasmic side.

Belongs to the MIP/aquaporin (TC 1.A.8) family.

It localises to the membrane. It carries out the reaction H2O(in) = H2O(out). Its function is as follows. Probable water channel required to facilitate the transport of water across membranes. The chain is Aquaporin Lacbi1:233199 from Laccaria bicolor (strain S238N-H82 / ATCC MYA-4686) (Bicoloured deceiver).